The primary structure comprises 265 residues: Cytochrome b-c1 complex subunit Rieske, mitochondrial (265 aa).

Residues 1–53 constitute a mitochondrion transit peptide; that stretch reads MLRVAGRRLSSSAARSSSTFFTRSSFTVTDDSSPARSPSPSLTSSFLDQIRGF. Residues 54 to 102 are Mitochondrial matrix-facing; sequence SSNSVSPAHQLGLVSDLPATVAAIKNPSSKIVYDDSNHERYPPGDPSKR. A helical membrane pass occupies residues 103 to 125; that stretch reads AFAYFVLTGGRFVYASSVRLLIL. The Mitochondrial intermembrane segment spans residues 126–265; the sequence is KFVLSMSASK…FLEENKLLIG (140 aa). The region spanning 175-263 is the Rieske domain; it reads IKLANSVDLG…YSFLEENKLL (89 aa). [2Fe-2S] cluster-binding residues include cysteine 208, histidine 210, cysteine 227, and histidine 230. Cysteine 213 and cysteine 229 form a disulfide bridge.

It belongs to the Rieske iron-sulfur protein family. As to quaternary structure, component of the ubiquinol-cytochrome c oxidoreductase (cytochrome b-c1 complex, complex III, CIII), a multisubunit enzyme composed of 3 respiratory subunits cytochrome b, cytochrome c1 and Rieske protein, 2 core protein subunits, and several low-molecular weight protein subunits. The complex exists as an obligatory dimer and forms supercomplexes (SCs) in the inner mitochondrial membrane with cytochrome c oxidase (complex IV, CIV). [2Fe-2S] cluster serves as cofactor.

Its subcellular location is the mitochondrion inner membrane. It carries out the reaction a quinol + 2 Fe(III)-[cytochrome c](out) = a quinone + 2 Fe(II)-[cytochrome c](out) + 2 H(+)(out). Component of the ubiquinol-cytochrome c oxidoreductase, a multisubunit transmembrane complex that is part of the mitochondrial electron transport chain which drives oxidative phosphorylation. The respiratory chain contains 3 multisubunit complexes succinate dehydrogenase (complex II, CII), ubiquinol-cytochrome c oxidoreductase (cytochrome b-c1 complex, complex III, CIII) and cytochrome c oxidase (complex IV, CIV), that cooperate to transfer electrons derived from NADH and succinate to molecular oxygen, creating an electrochemical gradient over the inner membrane that drives transmembrane transport and the ATP synthase. The cytochrome b-c1 complex catalyzes electron transfer from ubiquinol to cytochrome c, linking this redox reaction to translocation of protons across the mitochondrial inner membrane, with protons being carried across the membrane as hydrogens on the quinol. In the process called Q cycle, 2 protons are consumed from the matrix, 4 protons are released into the intermembrane space and 2 electrons are passed to cytochrome c. The Rieske protein is a catalytic core subunit containing a [2Fe-2S] iron-sulfur cluster. It cycles between 2 conformational states during catalysis to transfer electrons from the quinol bound in the Q(0) site in cytochrome b to cytochrome c1. This Solanum tuberosum (Potato) protein is Cytochrome b-c1 complex subunit Rieske, mitochondrial (FES1).